Consider the following 404-residue polypeptide: Glucose-1-phosphate adenylyltransferase (404 aa).

Residues tyrosine 99, glycine 164, 179–180, and serine 197 each bind alpha-D-glucose 1-phosphate; that span reads EK.

This sequence belongs to the bacterial/plant glucose-1-phosphate adenylyltransferase family.

It carries out the reaction alpha-D-glucose 1-phosphate + ATP + H(+) = ADP-alpha-D-glucose + diphosphate. Its pathway is capsule biogenesis; capsule polysaccharide biosynthesis. The protein operates within glycan biosynthesis; glycogen biosynthesis. Functionally, involved in the biosynthesis of ADP-glucose, a building block, required in the biosynthesis of maltose-1-phosphate (M1P) and in the elongation reactions to produce linear alpha-1,4-glucans. Catalyzes the reaction between ATP and alpha-D-glucose 1-phosphate (G1P) to produce pyrophosphate and ADP-Glc. The chain is Glucose-1-phosphate adenylyltransferase from Mycolicibacterium paratuberculosis (strain ATCC BAA-968 / K-10) (Mycobacterium paratuberculosis).